Here is a 156-residue protein sequence, read N- to C-terminus: Ribonuclease H (156 aa).

Residues 1 to 142 (MNKQVEIFTD…CDELARQAAE (142 aa)) form the RNase H type-1 domain. D10, E48, D70, and D134 together coordinate Mg(2+). A disordered region spans residues 135–156 (ELARQAAENPTEDDIGYQPEPQ).

This sequence belongs to the RNase H family. Monomer. Requires Mg(2+) as cofactor.

It is found in the cytoplasm. The catalysed reaction is Endonucleolytic cleavage to 5'-phosphomonoester.. Functionally, endonuclease that specifically degrades the RNA of RNA-DNA hybrids. This is Ribonuclease H from Vibrio cholerae serotype O1 (strain M66-2).